The following is a 100-amino-acid chain: Urease subunit gamma (100 aa).

The protein belongs to the urease gamma subunit family. In terms of assembly, heterotrimer of UreA (gamma), UreB (beta) and UreC (alpha) subunits. Three heterotrimers associate to form the active enzyme. The apoenzyme interacts with an accessory complex composed of UreD, UreF and UreG, which is required for the assembly of the nickel containing metallocenter of UreC. The UreE protein may also play a direct role as a metallochaperone in nickel transfer to the urease apoprotein.

The protein localises to the cytoplasm. It carries out the reaction urea + 2 H2O + H(+) = hydrogencarbonate + 2 NH4(+). The protein operates within nitrogen metabolism; urea degradation; CO(2) and NH(3) from urea (urease route): step 1/1. With respect to regulation, the apoenzyme can be activated in vitro in the presence of nickel ions and carbon dioxide, which promotes carbamylation of 'Lys-217' of the UreC (alpha) subunit. The protein is Urease subunit gamma of Klebsiella aerogenes (Enterobacter aerogenes).